Here is a 168-residue protein sequence, read N- to C-terminus: Photosystem I assembly protein Ycf3 (168 aa).

3 TPR repeats span residues 35–68 (AFTY…EIDP), 72–105 (SYIL…NPFL), and 120–153 (GEQA…TPGN).

It belongs to the Ycf3 family.

The protein resides in the plastid. Its subcellular location is the chloroplast thylakoid membrane. In terms of biological role, essential for the assembly of the photosystem I (PSI) complex. May act as a chaperone-like factor to guide the assembly of the PSI subunits. This chain is Photosystem I assembly protein Ycf3, found in Phaseolus vulgaris (Kidney bean).